The primary structure comprises 314 residues: Ribosomal RNA small subunit methyltransferase H (314 aa).

S-adenosyl-L-methionine contacts are provided by residues 36–38 (AGH), D56, F83, D104, and Q111.

The protein belongs to the methyltransferase superfamily. RsmH family.

It localises to the cytoplasm. The catalysed reaction is cytidine(1402) in 16S rRNA + S-adenosyl-L-methionine = N(4)-methylcytidine(1402) in 16S rRNA + S-adenosyl-L-homocysteine + H(+). In terms of biological role, specifically methylates the N4 position of cytidine in position 1402 (C1402) of 16S rRNA. This is Ribosomal RNA small subunit methyltransferase H from Brevibacillus brevis (strain 47 / JCM 6285 / NBRC 100599).